We begin with the raw amino-acid sequence, 158 residues long: Cyclic pyranopterin monophosphate synthase (158 aa).

Substrate-binding positions include 76-78 (LCH) and 114-115 (ME). Asp-129 is an active-site residue.

The protein belongs to the MoaC family. Homohexamer; trimer of dimers.

It catalyses the reaction (8S)-3',8-cyclo-7,8-dihydroguanosine 5'-triphosphate = cyclic pyranopterin phosphate + diphosphate. The protein operates within cofactor biosynthesis; molybdopterin biosynthesis. Its function is as follows. Catalyzes the conversion of (8S)-3',8-cyclo-7,8-dihydroguanosine 5'-triphosphate to cyclic pyranopterin monophosphate (cPMP). The polypeptide is Cyclic pyranopterin monophosphate synthase (Brucella anthropi (strain ATCC 49188 / DSM 6882 / CCUG 24695 / JCM 21032 / LMG 3331 / NBRC 15819 / NCTC 12168 / Alc 37) (Ochrobactrum anthropi)).